The primary structure comprises 215 residues: Phosphatidylserine decarboxylase proenzyme (215 aa).

S184 (schiff-base intermediate with substrate; via pyruvic acid) is an active-site residue. The residue at position 184 (S184) is a Pyruvic acid (Ser); by autocatalysis.

The protein belongs to the phosphatidylserine decarboxylase family. PSD-A subfamily. In terms of assembly, heterodimer of a large membrane-associated beta subunit and a small pyruvoyl-containing alpha subunit. The cofactor is pyruvate. Post-translationally, is synthesized initially as an inactive proenzyme. Formation of the active enzyme involves a self-maturation process in which the active site pyruvoyl group is generated from an internal serine residue via an autocatalytic post-translational modification. Two non-identical subunits are generated from the proenzyme in this reaction, and the pyruvate is formed at the N-terminus of the alpha chain, which is derived from the carboxyl end of the proenzyme. The post-translation cleavage follows an unusual pathway, termed non-hydrolytic serinolysis, in which the side chain hydroxyl group of the serine supplies its oxygen atom to form the C-terminus of the beta chain, while the remainder of the serine residue undergoes an oxidative deamination to produce ammonia and the pyruvoyl prosthetic group on the alpha chain.

It is found in the cell membrane. The enzyme catalyses a 1,2-diacyl-sn-glycero-3-phospho-L-serine + H(+) = a 1,2-diacyl-sn-glycero-3-phosphoethanolamine + CO2. Its pathway is phospholipid metabolism; phosphatidylethanolamine biosynthesis; phosphatidylethanolamine from CDP-diacylglycerol: step 2/2. Catalyzes the formation of phosphatidylethanolamine (PtdEtn) from phosphatidylserine (PtdSer). The polypeptide is Phosphatidylserine decarboxylase proenzyme (Ralstonia pickettii (strain 12J)).